The sequence spans 171 residues: Transcription antitermination protein NusB (171 aa).

It belongs to the NusB family.

Involved in transcription antitermination. Required for transcription of ribosomal RNA (rRNA) genes. Binds specifically to the boxA antiterminator sequence of the ribosomal RNA (rrn) operons. The protein is Transcription antitermination protein NusB of Brucella ovis (strain ATCC 25840 / 63/290 / NCTC 10512).